Here is a 132-residue protein sequence, read N- to C-terminus: Small ribosomal subunit protein uS8 (132 aa).

It belongs to the universal ribosomal protein uS8 family. Part of the 30S ribosomal subunit. Contacts proteins S5 and S12.

In terms of biological role, one of the primary rRNA binding proteins, it binds directly to 16S rRNA central domain where it helps coordinate assembly of the platform of the 30S subunit. The sequence is that of Small ribosomal subunit protein uS8 (rpsH) from Caldanaerobacter subterraneus subsp. tengcongensis (strain DSM 15242 / JCM 11007 / NBRC 100824 / MB4) (Thermoanaerobacter tengcongensis).